The primary structure comprises 1001 residues: DNA topoisomerase 3-alpha (1001 aa).

One can recognise a Toprim domain in the interval 35–179 (KVLCVAEKND…NLQVLRARFS (145 aa)). A Topo IA-type catalytic domain is found at 197-617 (DQRVSDAVDV…QQVQKYKQVF (421 aa)). The active-site O-(5'-phospho-DNA)-tyrosine intermediate is the tyrosine 362. The tract at residues 400–424 (GGPTPRNGNKSDQAHPPIHPTKYTN) is disordered. The C4-type zinc finger occupies 658 to 685 (CPQCNKDMVLKTKKNGGFYLSCMGFPEC). Residues 774–792 (RMDNSQHPQPADSRQTGSS) show a composition bias toward polar residues. A disordered region spans residues 774–810 (RMDNSQHPQPADSRQTGSSKALAQTLPPPTAAGESNS). Residues cysteine 813, cysteine 815, cysteine 838, cysteine 843, cysteine 897, cysteine 899, cysteine 922, and cysteine 930 each contribute to the Zn(2+) site. 2 GRF-type zinc fingers span residues 813 to 852 (CNCG…ADSP) and 897 to 939 (CLCS…VDEN). A disordered region spans residues 937–1001 (DENTAPGTSG…HTRPFCPQNR (65 aa)). Residues 953–964 (DRGRTLESEARS) are compositionally biased toward basic and acidic residues.

The protein belongs to the type IA topoisomerase family. Binds ssDNA. Interacts (via N-terminal region) with BLM; the interaction is direct. Directly interacts with RMI1. Component of the RMI complex, containing at least TOP3A, RMI1 and RMI2. The RMI complex interacts with BLM. Requires Mg(2+) as cofactor. As to expression, high expression is found in testis, heart, skeletal muscle and pancreas.

The protein resides in the mitochondrion matrix. The catalysed reaction is ATP-independent breakage of single-stranded DNA, followed by passage and rejoining.. Releases the supercoiling and torsional tension of DNA introduced during the DNA replication and transcription by transiently cleaving and rejoining one strand of the DNA duplex. Introduces a single-strand break via transesterification at a target site in duplex DNA. The scissile phosphodiester is attacked by the catalytic tyrosine of the enzyme, resulting in the formation of a DNA-(5'-phosphotyrosyl)-enzyme intermediate and the expulsion of a 3'-OH DNA strand. The free DNA strand then undergoes passage around the unbroken strand thus removing DNA supercoils. Finally, in the religation step, the DNA 3'-OH attacks the covalent intermediate to expel the active-site tyrosine and restore the DNA phosphodiester backbone. As an essential component of the RMI complex it is involved in chromosome separation and the processing of homologous recombination intermediates to limit DNA crossover formation in cells. Has DNA decatenation activity. It is required for mtDNA decatenation and segregation after completion of replication, in a process that does not require BLM, RMI1 and RMI2. This Homo sapiens (Human) protein is DNA topoisomerase 3-alpha (TOP3A).